A 321-amino-acid polypeptide reads, in one-letter code: D-alanine--D-alanine ligase (321 aa).

In terms of domain architecture, ATP-grasp spans 121–315; the sequence is RSCFLKNNIN…FTNLIEEIIK (195 aa). Residue 148–199 participates in ATP binding; sequence MKRPYVIKPLKQGSSIGVEVIFEEDDFHFIDYDFPYGEDIIIEQYIQGQELQ. 3 residues coordinate Mg(2+): Glu268, Glu282, and Asn284.

It belongs to the D-alanine--D-alanine ligase family. It depends on Mg(2+) as a cofactor. Mn(2+) is required as a cofactor.

It localises to the cytoplasm. The catalysed reaction is 2 D-alanine + ATP = D-alanyl-D-alanine + ADP + phosphate + H(+). Its pathway is cell wall biogenesis; peptidoglycan biosynthesis. In terms of biological role, cell wall formation. In Rickettsia typhi (strain ATCC VR-144 / Wilmington), this protein is D-alanine--D-alanine ligase.